The sequence spans 134 residues: Secretin (134 aa).

Residues 1-21 form the signal peptide; it reads MATRALLLLLLLPPLLLLAGC. Residues 22–31 constitute a propeptide that is removed on maturation; the sequence is AARPAPPRAP. A Valine amide modification is found at V59. A Phosphoserine modification is found at S63. A propeptide spanning residues 63 to 134 is cleaved from the precursor; the sequence is SQQDPENNTA…PAAEGSPMPP (72 aa).

It belongs to the glucagon family.

It is found in the secreted. Its function is as follows. Hormone involved in different processes, such as regulation of the pH of the duodenal content, food intake and water homeostasis. Exerts its biological effects by binding to secretin receptor (SCTR), a G-protein coupled receptor expressed in the basolateral domain of several cells. Acts as a key gastrointestinal hormone by regulating the pH of the duodenal content. Secreted by S cells of the duodenum in the crypts of Lieberkuehn and regulates the pH of the duodenum by (1) inhibiting the secretion of gastric acid from the parietal cells of the stomach and (2) stimulating the production of bicarbonate (NaHCO(3)) from the ductal cells of the pancreas. Production of bicarbonate is essential to neutralize the pH and ensure no damage is done to the small intestine by the gastric acid. In addition to regulating the pH of the duodenal content, plays a central role in diet induced thermogenesis: acts as a non-sympathetic brown fat (BAT) activator mediating prandial thermogenesis, which consequentially induces satiation. Mechanistically, secretin released by the gut after a meal binds to secretin receptor (SCTR) in brown adipocytes, activating brown fat thermogenesis by stimulating lipolysis, which is sensed in the brain and promotes satiation. Also able to stimulate lipolysis in white adipocytes. Also plays an important role in cellular osmoregulation: released into the systemic circulation in response to hyperosmolality and acts at different levels in the hypothalamus, pituitary and kidney to regulate water homeostasis. Also plays a role in the central nervous system, possibly by acting as a neuropeptide hormone: required for hippocampal synaptic function and neural progenitor cells maintenance. The chain is Secretin from Sus scrofa (Pig).